A 36-amino-acid chain; its full sequence is Hemoglobin subunit beta (36 aa).

A Globin domain is found at 1–36 (VCVLAHHFGKEFTPQVQAAYQKVVAGVANALAHKYH). Position 34 is an N6-acetyllysine (K34).

The protein belongs to the globin family. In terms of assembly, heterotetramer of two alpha chains and two beta chains. Red blood cells.

Functionally, involved in oxygen transport from the lung to the various peripheral tissues. The sequence is that of Hemoglobin subunit beta (HBB) from Pongo pygmaeus (Bornean orangutan).